A 51-amino-acid chain; its full sequence is Large ribosomal subunit protein eL39 (51 aa).

The protein belongs to the eukaryotic ribosomal protein eL39 family.

The sequence is that of Large ribosomal subunit protein eL39 from Saccharolobus islandicus (strain Y.N.15.51 / Yellowstone #2) (Sulfolobus islandicus).